A 375-amino-acid chain; its full sequence is Nucleosome assembly protein 1-like 4 (375 aa).

A disordered region spans residues 1 to 28 (MAENSLSDGGPADSVEAAKNASNTEKLT). N-acetylalanine is present on alanine 2. A phosphoserine mark is found at serine 5, serine 7, and serine 49. The residue at position 51 (threonine 51) is a Phosphothreonine. Serine 53 and serine 54 each carry phosphoserine. Position 58 is a phosphothreonine (threonine 58). N6-acetyllysine is present on lysine 105. Serine 125 carries the phosphoserine modification. Residue lysine 146 is modified to N6-acetyllysine. The Nuclear localization signal signature appears at 265 to 271 (IKKKQKH). The residue at position 304 (serine 304) is a Phosphoserine. Residues 339-375 (AIEDDDNFEEGEEGEEEELEGDEEGEDEDDADVNPKV) are disordered.

The protein belongs to the nucleosome assembly protein (NAP) family. Interacts with core (H2A, H2B, H3, H4) and linker (H1) histones. Post-translationally, polyglutamylated and polyglycylated. These 2 modifications occur exclusively on glutamate residues and result in either polyglutamate or polyglycine chains on the gamma-carboxyl group. Both modifications can coexist on the same protein on adjacent residues, and lowering polyglycylation levels increases polyglutamylation, and reciprocally. Polyglutamylated by TTLL4. In terms of processing, phosphorylated at the G0/G1 boundary but it is not phosphorylated in S-phase. Phosphorylated protein remains in the cytoplasm in a complex with histones during the G0/G1 transition, whereas dephosphorylation triggers its transport into the nucleus at the G1/S-boundary.

Its subcellular location is the nucleus. The protein localises to the cytoplasm. Acts as a histone chaperone in nucleosome assembly. In condensing spermatids, mediates the loading of the heterodimer composed of histones H2AB1 and H2BC1/TH2B onto the nucleosomes, thereby promoting the replacement of histones to protamine in male germ cells. The chain is Nucleosome assembly protein 1-like 4 (Nap1l4) from Mus musculus (Mouse).